Consider the following 473-residue polypeptide: Serine palmitoyltransferase 1 (473 aa).

Topologically, residues 1–15 (MAMAAEQWVLVEMVQ) are lumenal. The interaction with SPTLC2 stretch occupies residues 1–66 (MAMAAEQWVL…KEELIEEWQP (66 aa)). Residues 16-36 (ALYEAPAYHLILEGILILWII) form a helical membrane-spanning segment. The Cytoplasmic segment spans residues 37–473 (RLVFSKTYKL…IREAAQAVLL (437 aa)). Residue Tyr164 is modified to Phosphotyrosine; by ABL.

This sequence belongs to the class-II pyridoxal-phosphate-dependent aminotransferase family. In terms of assembly, component of the serine palmitoyltransferase (SPT) complex, which is also composed of SPTLC2 or SPTLC3 and SPTSSA or SPTSSB. The heterodimer with SPTLC2 or SPTLC3 forms the catalytic core of the enzyme, while SPTSSA or SPTSSB subunits determine substrate specificity. SPT also interacts with ORMDL proteins, especially ORMDL3, which negatively regulate SPT activity in the presence of ceramides. Forms dimers of heterodimers with SPTLC2. Interacts with RTN4. Pyridoxal 5'-phosphate serves as cofactor. Phosphorylation at Tyr-164 inhibits activity and promotes cell survival.

Its subcellular location is the endoplasmic reticulum membrane. It catalyses the reaction L-serine + hexadecanoyl-CoA + H(+) = 3-oxosphinganine + CO2 + CoA. The enzyme catalyses octadecanoyl-CoA + L-serine + H(+) = 3-oxoeicosasphinganine + CO2 + CoA. The catalysed reaction is tetradecanoyl-CoA + L-serine + H(+) = 3-oxohexadecasphinganine + CO2 + CoA. It carries out the reaction dodecanoyl-CoA + L-serine + H(+) = 3-oxotetradecasphinganine + CO2 + CoA. The protein operates within lipid metabolism; sphingolipid metabolism. With respect to regulation, SPT complex catalytic activity is negatively regulated by ORMDL proteins, including ORMDL3, in the presence of ceramides. This mechanism allows to maintain ceramide levels at sufficient concentrations for the production of complex sphingolipids, but which prevents the accumulation of ceramides to levels that trigger apoptosis. In terms of biological role, component of the serine palmitoyltransferase multisubunit enzyme (SPT) that catalyzes the initial and rate-limiting step in sphingolipid biosynthesis by condensing L-serine and activated acyl-CoA (most commonly palmitoyl-CoA) to form long-chain bases. The SPT complex is also composed of SPTLC2 or SPTLC3 and SPTSSA or SPTSSB. Within this complex, the heterodimer with SPTLC2 or SPTLC3 forms the catalytic core. The composition of the serine palmitoyltransferase (SPT) complex determines the substrate preference. The SPTLC1-SPTLC2-SPTSSA complex shows a strong preference for C16-CoA substrate, while the SPTLC1-SPTLC3-SPTSSA isozyme uses both C14-CoA and C16-CoA as substrates, with a slight preference for C14-CoA. The SPTLC1-SPTLC2-SPTSSB complex shows a strong preference for C18-CoA substrate, while the SPTLC1-SPTLC3-SPTSSB isozyme displays an ability to use a broader range of acyl-CoAs, without apparent preference. Required for adipocyte cell viability and metabolic homeostasis. This is Serine palmitoyltransferase 1 (SPTLC1) from Cricetulus griseus (Chinese hamster).